A 293-amino-acid chain; its full sequence is sn-glycerol-3-phosphate transport system permease protein UgpA (293 aa).

The next 6 membrane-spanning stretches (helical) occupy residues 10–30, 72–92, 108–128, 156–176, 204–224, and 261–281; these read ILPY…FFWP, VTVI…LLLA, MMIM…LFMF, MLLV…LFFV, IVFP…TVYA, and LGSS…LTAF. The 217-residue stretch at 66–282 folds into the ABC transmembrane type-1 domain; that stretch reads YLNSLKVTVI…VIVIALTAFQ (217 aa).

Belongs to the binding-protein-dependent transport system permease family. The complex is composed of two ATP-binding proteins (UgpC), two transmembrane proteins (UgpA and UgpE) and a solute-binding protein (UgpB).

It localises to the cell inner membrane. Its function is as follows. Part of the ABC transporter complex UgpBAEC involved in sn-glycerol-3-phosphate (G3P) import. Probably responsible for the translocation of the substrate across the membrane. The chain is sn-glycerol-3-phosphate transport system permease protein UgpA (ugpA) from Agrobacterium fabrum (strain C58 / ATCC 33970) (Agrobacterium tumefaciens (strain C58)).